Reading from the N-terminus, the 382-residue chain is GDSL esterase/lipase At4g01130 (382 aa).

The first 28 residues, 1-28 (MASDINRRRSFSLLVLIIVMLYGHKGDS), serve as a signal peptide directing secretion. S41 serves as the catalytic Nucleophile. N-linked (GlcNAc...) asparagine glycans are attached at residues N118, N263, N275, and N330. Residues D348 and H351 contribute to the active site.

The protein belongs to the 'GDSL' lipolytic enzyme family.

It is found in the secreted. The protein is GDSL esterase/lipase At4g01130 of Arabidopsis thaliana (Mouse-ear cress).